A 431-amino-acid polypeptide reads, in one-letter code: UDP-N-acetylglucosamine 1-carboxyvinyltransferase (431 aa).

Residue 22–23 (KN) participates in phosphoenolpyruvate binding. Residue Arg102 participates in UDP-N-acetyl-alpha-D-glucosamine binding. Cys126 functions as the Proton donor in the catalytic mechanism. 2-(S-cysteinyl)pyruvic acid O-phosphothioketal is present on Cys126. UDP-N-acetyl-alpha-D-glucosamine is bound by residues Asp318 and Ile340.

The protein belongs to the EPSP synthase family. MurA subfamily.

Its subcellular location is the cytoplasm. It catalyses the reaction phosphoenolpyruvate + UDP-N-acetyl-alpha-D-glucosamine = UDP-N-acetyl-3-O-(1-carboxyvinyl)-alpha-D-glucosamine + phosphate. It participates in cell wall biogenesis; peptidoglycan biosynthesis. Cell wall formation. Adds enolpyruvyl to UDP-N-acetylglucosamine. This is UDP-N-acetylglucosamine 1-carboxyvinyltransferase from Bartonella henselae (strain ATCC 49882 / DSM 28221 / CCUG 30454 / Houston 1) (Rochalimaea henselae).